The chain runs to 381 residues: L-lactate dehydrogenase (381 aa).

One can recognise an FMN hydroxy acid dehydrogenase domain in the interval methionine 1–glycine 380. Tyrosine 24 lines the substrate pocket. FMN-binding residues include serine 106 and glutamine 127. Tyrosine 129 serves as a coordination point for substrate. Threonine 155 lines the FMN pocket. Residue arginine 164 coordinates substrate. Position 251 (lysine 251) interacts with FMN. The active-site Proton acceptor is the histidine 275. Arginine 278 provides a ligand contact to substrate. Aspartate 306 to arginine 330 contacts FMN.

The protein belongs to the FMN-dependent alpha-hydroxy acid dehydrogenase family. Homotetramer. The cofactor is FMN.

It is found in the cell inner membrane. The enzyme catalyses (S)-lactate + A = pyruvate + AH2. Functionally, catalyzes the conversion of L-lactate to pyruvate. Is coupled to the respiratory chain. This chain is L-lactate dehydrogenase, found in Pseudomonas entomophila (strain L48).